Consider the following 71-residue polypeptide: Non-disulfide-bridged peptide 5.5 (71 aa).

A signal peptide spans 1–23 (MKTQFIVLIVAIVFLQLLSQSEA). L36 bears the Leucine amide mark. Positions 40–71 (DLRHLDLDQFDDMFDQPEISAADMKFLQDLLR) are excised as a propeptide.

The protein belongs to the non-disulfide-bridged peptide (NDBP) superfamily. Short antimicrobial peptide (group 4) family. As to expression, expressed by the venom gland.

It is found in the secreted. It localises to the target cell membrane. Its function is as follows. Antimicrobial peptide. Is active on Mycobacterium abscessus subsp. massiliense (MBC=200 uM), a rapidly growing and emerging pathogen associated with healthcare infections. Also shows antifungal activities. Has a weak hemolytic activity on human erythrocytes (10% at 610 uM), indicating a low toxicity (therapeutic index (TI)=3.05). In addition, treatment of infected macrophages reduces the bacterial load. In vivo, treatment of M.abscessus-infected mice causes a decrease in the bacterial load in the lungs and liver. In Hoffmannihadrurus gertschi (Scorpion), this protein is Non-disulfide-bridged peptide 5.5.